Reading from the N-terminus, the 249-residue chain is Probable transcriptional regulatory protein ZMO0153 (249 aa).

It belongs to the TACO1 family.

It is found in the cytoplasm. The chain is Probable transcriptional regulatory protein ZMO0153 from Zymomonas mobilis subsp. mobilis (strain ATCC 31821 / ZM4 / CP4).